Consider the following 703-residue polypeptide: Arylphorin subunit beta (703 aa).

Residues 1–16 (MKTVIILAGLVALALG) form the signal peptide. N-linked (GlcNAc...) asparagine glycosylation is found at N72 and N211.

Belongs to the hemocyanin family. As to quaternary structure, arylphorin is a hexamer of subunits alpha and beta. Fat body.

Its subcellular location is the secreted. It is found in the extracellular space. Arylphorin is a larval storage protein (LSP) which may serve as a storage protein used primarily as a source of aromatic amino acids for protein synthesis during metamorphosis. It is a constituent of the sclerotizing system of the cuticle, and serves as a carrier for ecdysteroid hormone. This Manduca sexta (Tobacco hawkmoth) protein is Arylphorin subunit beta.